Here is a 158-residue protein sequence, read N- to C-terminus: C-type lection lectoxin-Enh3 (158 aa).

Positions 1–23 (MGQFTVVSLGLLAMFLSLSGAKG) are cleaved as a signal peptide. Cystine bridges form between cysteine 26–cysteine 37, cysteine 54–cysteine 154, and cysteine 129–cysteine 146. The region spanning 33–155 (RNGVCNKLFP…CASLHPFICQ (123 aa)) is the C-type lectin domain. Residues 119-121 (EPN) carry the Mannose-binding motif. The Ca(2+) site is built by glutamate 127, asparagine 142, and aspartate 143.

This sequence belongs to the true venom lectin family. Expressed by the venom gland.

Its subcellular location is the secreted. Mannose-binding lectin which recognizes specific carbohydrate structures and agglutinates a variety of animal cells by binding to cell-surface glycoproteins and glycolipids. May be a calcium-dependent lectin. The protein is C-type lection lectoxin-Enh3 of Pseudoferania polylepis (Macleay's water snake).